We begin with the raw amino-acid sequence, 316 residues long: Ribosomal RNA small subunit methyltransferase H (316 aa).

S-adenosyl-L-methionine contacts are provided by residues 35–37 (SGH), Asp-55, Phe-84, Asp-105, and Gln-112.

It belongs to the methyltransferase superfamily. RsmH family.

Its subcellular location is the cytoplasm. The enzyme catalyses cytidine(1402) in 16S rRNA + S-adenosyl-L-methionine = N(4)-methylcytidine(1402) in 16S rRNA + S-adenosyl-L-homocysteine + H(+). Its function is as follows. Specifically methylates the N4 position of cytidine in position 1402 (C1402) of 16S rRNA. This is Ribosomal RNA small subunit methyltransferase H from Streptococcus pyogenes serotype M18 (strain MGAS8232).